The following is a 487-amino-acid chain: MAGILCLCGMMRLLTALFIPVLIASIGLCLVLVLLFICTRLWIQRKKKQSVEIGKDGKKKRVVAFFHPYCNAGGGGERVLWCALRSLQKRYKDAIYVIYTGDKDVSEEQILNGAAARFNIKLSHPVKFIFLEKRGLVEASFYPRFTLLGQSLGSVVLGWEALTKCVPDIYIDSMGYAFTLPLFKYVGGCQVGCYVHYPTISMDMLSVVRSQNARFNNAAFISNNPVLSRLKLIYYYLFAVIYGWVGSCSDVIMVNSTWTFAHILDLWKCSERTSIVYPPCDVQTFLDINLNQHKDIEEHSIVSIGQFRPEKDHPLQICAFAALLKKKTTEKLKLKLILIGGCRNNEDELRVSELKKLSSELGIPVEFKVNIPFAELKKHLSEATIGLHTMWNEHFGIGIVECMAAGTIILAHNSGGPKLDIVVPYEEHETGFLADSVESYAAAMDYILCLTPEQRLTIRQNARRSVARFSDQEFEANFLASSEPLFM.

Over 1–16 the chain is Lumenal; the sequence is MAGILCLCGMMRLLTA. Residues 17–37 traverse the membrane as a helical segment; that stretch reads LFIPVLIASIGLCLVLVLLFI. The Cytoplasmic segment spans residues 38 to 231; that stretch reads CTRLWIQRKK…SNNPVLSRLK (194 aa). Residues 232–252 constitute an intramembrane region (helical); sequence LIYYYLFAVIYGWVGSCSDVI. Residues 253 to 394 lie on the Cytoplasmic side of the membrane; that stretch reads MVNSTWTFAH…IGLHTMWNEH (142 aa). An intramembrane region (helical) is located at residues 395–415; sequence FGIGIVECMAAGTIILAHNSG. The Cytoplasmic segment spans residues 416–487; it reads GPKLDIVVPY…FLASSEPLFM (72 aa).

Belongs to the glycosyltransferase group 1 family. Glycosyltransferase 4 subfamily.

The protein localises to the endoplasmic reticulum membrane. It carries out the reaction an alpha-D-Man-(1-&gt;3)-[alpha-D-Man-(1-&gt;6)]-beta-D-Man-(1-&gt;4)-beta-D-GlcNAc-(1-&gt;4)-alpha-D-GlcNAc-diphospho-di-trans,poly-cis-dolichol + 2 GDP-alpha-D-mannose = an alpha-D-Man-(1-&gt;2)-alpha-D-Man-(1-&gt;2)-alpha-D-Man-(1-&gt;3)-[alpha-D-Man-(1-&gt;6)]-beta-D-Man-(1-&gt;4)-beta-D-GlcNAc-(1-&gt;4)-alpha-D-GlcNAc-diphospho-di-trans,poly-cis-dolichol + 2 GDP + 2 H(+). Its pathway is protein modification; protein glycosylation. Functionally, GDP-Man:Man(3)GlcNAc(2)-PP-Dol alpha-1,2-mannosyltransferase that operates in the biosynthetic pathway of dolichol-linked oligosaccharides, the glycan precursors employed in protein asparagine (N)-glycosylation. The assembly of dolichol-linked oligosaccharides begins on the cytosolic side of the endoplasmic reticulum membrane and finishes in its lumen. The sequential addition of sugars to dolichol pyrophosphate produces dolichol-linked oligosaccharides containing fourteen sugars, including two GlcNAcs, nine mannoses and three glucoses. Once assembled, the oligosaccharide is transferred from the lipid to nascent proteins by oligosaccharyltransferases. Catalyzes, on the cytoplasmic face of the endoplasmic reticulum, the addition of the fourth and fifth mannose residues to the dolichol-linked oligosaccharide chain, to produce Man(5)GlcNAc(2)-PP-dolichol core oligosaccharide. Man(5)GlcNAc(2)-PP-dolichol is a substrate for ALG3, the following enzyme in the biosynthetic pathway. The sequence is that of GDP-Man:Man(3)GlcNAc(2)-PP-Dol alpha-1,2-mannosyltransferase (alg11) from Xenopus tropicalis (Western clawed frog).